Here is a 280-residue protein sequence, read N- to C-terminus: Eukaryotic translation initiation factor 3 subunit F-1 (280 aa).

Residues 8 to 138 enclose the MPN domain; it reads VRVHPVVLFQ…LRAYVCIQLG (131 aa).

This sequence belongs to the eIF-3 subunit F family. In terms of assembly, component of the eukaryotic translation initiation factor 3 (eIF-3) complex. The eIF-3 complex interacts with pix.

Its subcellular location is the cytoplasm. Component of the eukaryotic translation initiation factor 3 (eIF-3) complex, which is involved in protein synthesis of a specialized repertoire of mRNAs and, together with other initiation factors, stimulates binding of mRNA and methionyl-tRNAi to the 40S ribosome. The eIF-3 complex specifically targets and initiates translation of a subset of mRNAs involved in cell proliferation. The protein is Eukaryotic translation initiation factor 3 subunit F-1 of Drosophila willistoni (Fruit fly).